Here is a 202-residue protein sequence, read N- to C-terminus: Protein Nef (202 aa).

Gly2 is lipidated: N-myristoyl glycine; by host. Ser6 is subject to Phosphoserine; by host. Positions 62–65 (EEEE) are acidic; interacts with host PACS1 and PACS2; stabilizes the interaction of NEF/MHC-I with host AP1M1; necessary for MHC-I internalization. Residues 69 to 78 (PVTPQVPLRP) form an SH3-binding; interaction with Src family tyrosine kinases region. The PxxP; stabilizes the interaction of NEF/MHC-I with host AP1M1; necessary for MHC-I internalization signature appears at 72–75 (PQVP). The mediates dimerization, Nef-PTE1 interaction stretch occupies residues 108 to 124 (DILDLWIYHTQGYFPDW). Residues 148 to 180 (VEPDKVEEANKGENTRLLHPVSLHGMDDPEREV) form a binding to ATP6V1H region. Residues 164–165 (LL) carry the Dileucine internalization motif; necessary for CD4 internalization motif. Positions 174 to 175 (DD) match the Diacidic; necessary for CD4 internalization motif.

The protein belongs to the lentivirus primate group Nef protein family. Monomer; cytosolic form. Homodimer; membrane bound form. Interacts with Nef associated p21-activated kinase (PAK2); this interaction activates PAK2. Associates with the Nef-MHC-I-AP1 complex; this complex is required for MHC-I internalization. Interacts (via C-terminus) with host PI3-kinase. Interacts with host PACS1; this interaction seems to be weak. Interacts with host PACS2. Interacts with host LCK and MAPK3; these interactions inhibit the kinase activity of the latter. Interacts with host ATP6V1H; this interaction may play a role in CD4 endocytosis. Associates with the CD4-Nef-AP2 complex; this complex is required for CD4 internalization. Interacts with host AP2 subunit alpha and AP2 subunit sigma2. Interacts with TCR-zeta chain; this interaction up-regulates the Fas ligand (FasL) surface expression. Interacts with host HCK, LYN, and SRC; these interactions activate the Src family kinases. Interacts with MAP3K5; this interaction inhibits the Fas and TNFR-mediated death signals. Interacts with beta-COP and PTE1. Interacts with human RACK1; this increases Nef phosphorylation by PKC. Interacts with TP53; this interaction decreases the half-life of TP53, protecting the infected cell against p53-mediated apoptosis. Post-translationally, the virion-associated Nef proteins are cleaved by the viral protease to release the soluble C-terminal core protein. Nef is probably cleaved concomitantly with viral structural proteins on maturation of virus particles. In terms of processing, myristoylated. Phosphorylated on serine residues, probably by host PKCdelta and theta.

It localises to the host cell membrane. The protein resides in the virion. It is found in the secreted. Its subcellular location is the host Golgi apparatus membrane. Factor of infectivity and pathogenicity, required for optimal virus replication. Alters numerous pathways of T-lymphocyte function and down-regulates immunity surface molecules in order to evade host defense and increase viral infectivity. Alters the functionality of other immunity cells, like dendritic cells, monocytes/macrophages and NK cells. Its function is as follows. In infected CD4(+) T-lymphocytes, down-regulates the surface MHC-I, mature MHC-II, CD4, CD28, CCR5 and CXCR4 molecules. Mediates internalization and degradation of host CD4 through the interaction of with the cytoplasmic tail of CD4, the recruitment of AP-2 (clathrin adapter protein complex 2), internalization through clathrin coated pits, and subsequent transport to endosomes and lysosomes for degradation. Diverts host MHC-I molecules to the trans-Golgi network-associated endosomal compartments by an endocytic pathway to finally target them for degradation. MHC-I down-regulation may involve AP-1 (clathrin adapter protein complex 1) or possibly Src family kinase-ZAP70/Syk-PI3K cascade recruited by PACS2. In consequence infected cells are masked for immune recognition by cytotoxic T-lymphocytes. Decreasing the number of immune receptors also prevents reinfection by more HIV particles (superinfection). Down-regulates host SERINC3 and SERINC5 thereby excluding these proteins from the viral particles. Virion infectivity is drastically higher when SERINC3 or SERINC5 are excluded from the viral envelope, because these host antiviral proteins impair the membrane fusion event necessary for subsequent virion penetration. Functionally, bypasses host T-cell signaling by inducing a transcriptional program nearly identical to that of anti-CD3 cell activation. Interaction with TCR-zeta chain up-regulates the Fas ligand (FasL). Increasing surface FasL molecules and decreasing surface MHC-I molecules on infected CD4(+) cells send attacking cytotoxic CD8+ T-lymphocytes into apoptosis. In terms of biological role, plays a role in optimizing the host cell environment for viral replication without causing cell death by apoptosis. Protects the infected cells from apoptosis in order to keep them alive until the next virus generation is ready to strike. Inhibits the Fas and TNFR-mediated death signals by blocking MAP3K5/ASK1. Decreases the half-life of TP53, protecting the infected cell against p53-mediated apoptosis. Inhibits the apoptotic signals regulated by the Bcl-2 family proteins through the formation of a Nef/PI3-kinase/PAK2 complex that leads to activation of PAK2 and induces phosphorylation of host BAD. Extracellular Nef protein targets CD4(+) T-lymphocytes for apoptosis by interacting with CXCR4 surface receptors. This Human immunodeficiency virus type 1 group M subtype B (isolate Lai) (HIV-1) protein is Protein Nef.